A 314-amino-acid chain; its full sequence is Serine/threonine-protein phosphatase CPPED1 (314 aa).

A Phosphoserine modification is found at S2. The interval 47-250 (KAWSTGDCDN…KVVFSGHYHR (204 aa)) is catalytic. 4 residues coordinate a divalent metal cation: D53, D90, N127, and H247. Phosphoserine is present on S294.

It belongs to the metallophosphoesterase superfamily. CPPED1 family. The cofactor is a divalent metal cation. As to expression, expressed in subcutaneous adipose tissue.

It is found in the cytoplasm. It catalyses the reaction O-phospho-L-seryl-[protein] + H2O = L-seryl-[protein] + phosphate. It carries out the reaction O-phospho-L-threonyl-[protein] + H2O = L-threonyl-[protein] + phosphate. Protein phosphatase that dephosphorylates AKT family kinase specifically at 'Ser-473', blocking cell cycle progression and promoting cell apoptosis. May play an inhibitory role in glucose uptake by adipocytes. This is Serine/threonine-protein phosphatase CPPED1 (CPPED1) from Homo sapiens (Human).